The sequence spans 321 residues: 1D-myo-inositol 2-acetamido-2-deoxy-alpha-D-glucopyranoside deacetylase (321 aa).

Residues His-15, Asp-18, and His-150 each coordinate Zn(2+). Positions 280–321 (PEGERESDLFAGLPPATDGTGAAGAPSATGAANPADAEGGAA) are disordered. Residues 290 to 321 (AGLPPATDGTGAAGAPSATGAANPADAEGGAA) show a composition bias toward low complexity.

Belongs to the MshB deacetylase family. The cofactor is Zn(2+).

It catalyses the reaction 1D-myo-inositol 2-acetamido-2-deoxy-alpha-D-glucopyranoside + H2O = 1D-myo-inositol 2-amino-2-deoxy-alpha-D-glucopyranoside + acetate. Its function is as follows. Catalyzes the deacetylation of 1D-myo-inositol 2-acetamido-2-deoxy-alpha-D-glucopyranoside (GlcNAc-Ins) in the mycothiol biosynthesis pathway. This Streptomyces griseus subsp. griseus (strain JCM 4626 / CBS 651.72 / NBRC 13350 / KCC S-0626 / ISP 5235) protein is 1D-myo-inositol 2-acetamido-2-deoxy-alpha-D-glucopyranoside deacetylase.